The following is a 114-amino-acid chain: Large ribosomal subunit protein bL19 (114 aa).

Belongs to the bacterial ribosomal protein bL19 family.

Its function is as follows. This protein is located at the 30S-50S ribosomal subunit interface and may play a role in the structure and function of the aminoacyl-tRNA binding site. In Lactococcus lactis subsp. cremoris (strain MG1363), this protein is Large ribosomal subunit protein bL19.